The chain runs to 444 residues: Type II NADH:quinone oxidoreductase (444 aa).

Residues 8–12, Asn38, and Ser120 contribute to the FAD site; that span reads GGGAG. NAD(+)-binding positions include 186 to 191 and Gly285; that span reads VGGGAT. Residues Asp325 and Ala341 each contribute to the FAD site.

The protein belongs to the NADH dehydrogenase family. FAD serves as cofactor.

It localises to the cell inner membrane. It catalyses the reaction a quinone + NADH + H(+) = a quinol + NAD(+). The enzyme catalyses a ubiquinone + NADH + H(+) = a ubiquinol + NAD(+). Alternative, nonproton pumping NADH:quinone oxidoreductase that delivers electrons to the respiratory chain by oxidation of NADH and reduction of quinones. Utilizes NADH exclusively, and electron flow from NADH to ubiquinone does not generate an electrochemical gradient. In Haemophilus influenzae (strain ATCC 51907 / DSM 11121 / KW20 / Rd), this protein is Type II NADH:quinone oxidoreductase (ndh).